An 89-amino-acid polypeptide reads, in one-letter code: MALDAAVKQSIIKEYATTEGDTGSPEVQVAVLTQRIKDLTEHMKEHKHDFHTQRGLLAMVGRRKRMLSYLKNTDIARYRALIERLGLRR.

The protein belongs to the universal ribosomal protein uS15 family. Part of the 30S ribosomal subunit. Forms a bridge to the 50S subunit in the 70S ribosome, contacting the 23S rRNA.

In terms of biological role, one of the primary rRNA binding proteins, it binds directly to 16S rRNA where it helps nucleate assembly of the platform of the 30S subunit by binding and bridging several RNA helices of the 16S rRNA. Its function is as follows. Forms an intersubunit bridge (bridge B4) with the 23S rRNA of the 50S subunit in the ribosome. This Paenarthrobacter aurescens (strain TC1) protein is Small ribosomal subunit protein uS15.